We begin with the raw amino-acid sequence, 647 residues long: Chaperone protein DnaK (647 aa).

Thr198 is modified (phosphothreonine; by autocatalysis). Residues 603-647 (EQAQGAGGAQGFDPNAFQGGDAGQQQKADDGVVDAEFTEVKDDKK) are disordered. Residues 618-628 (AFQGGDAGQQQ) are compositionally biased toward low complexity.

The protein belongs to the heat shock protein 70 family.

Acts as a chaperone. The polypeptide is Chaperone protein DnaK (Acinetobacter baylyi (strain ATCC 33305 / BD413 / ADP1)).